We begin with the raw amino-acid sequence, 697 residues long: MMRNRSKSPRRPSPTSRAANCDVELLKSTARDREELKCMLEKYERHLAEIQGNVKVLTSERDKTFLLYEQAQEEIARLRREMMKSCKSPKSTTAHAILRRVETERDVAFTDLRRMTTERDSLRERLKIAQETAFNEKAHLEQRIEELECTVHNLDDERMEQMANMTLMKETITTVEKEMKSLARKAMDTESELGRQKAENNSLRLLYENTEKDLSDTQRHLAKKKYELQLTQEKIMCLDEKIDNFTRQNIAQREEISILGATLNDLAKEKECLQACLDKKSENIASLGESLAMKEKTISGMKNIIAEMEQASRQSTEALIMCEQDISRMRRQLDETNDELGQIARERDILAHENDNLQEQFAKVKQENQALSKKLNDTHNELSDIKQKVQDTNLEVNKLKNILKSEESENRQIMEQLRKANEDAENWENKARQTEAENNTLKLELITAEAEGNRLKEKVDALNREVEQHLNAERSYKSQIATLHKSLVKMEEELQKVQFEKVSALADLSSTRELCIKLDSSKELLNRQLVAKDQEIEMMENELDSARSEIELLRSQMTNERISMQNLEALLVANRDKEYQSQIALQEKESEIQLLKEHLCLAENKMAIQSRDVAQFRNVVTQLEADLDITKRQLGTERFERERAVQELRRQNYSSNAYNLGPMKPNTKCHSPERAHHRSPDRGLDRSLEENLCYRDF.

An interaction with HIF1A region spans residues 556 to 688 (QMTNERISMQ…SPDRGLDRSL (133 aa)). Positions 656–684 (NAYNLGPMKPNTKCHSPERAHHRSPDRGL) are disordered. Positions 670-684 (HSPERAHHRSPDRGL) are enriched in basic and acidic residues. Position 687 is a phosphoserine (Ser687).

The protein belongs to the CEP135/TSGA10 family. Interacts with HIF1A. In terms of processing, processed into N-terminal 27-kDa and C-terminal 55-kDa fragments. In terms of tissue distribution, predominantly expressed in testis, in spermatozoa (at protein level). Not detected in Leydig cells. The N-terminal 27-kDa fragment is also detected in liver, while the C-terminal 55-kDa fragment is also found retina, brain and kidney (at protein level).

Its subcellular location is the cytoplasm. It is found in the cytoskeleton. The protein localises to the microtubule organizing center. It localises to the centrosome. The protein resides in the centriole. Plays a role in spermatogenesis. When overexpressed, prevents nuclear localization of HIF1A. The protein is Testis-specific gene 10 protein (Tsga10) of Mus musculus (Mouse).